The chain runs to 897 residues: MAEVSVKQLATDIDTPVDRLLQQFVDAGISKSKADDMVSESEKQTLLAHLKKQHGGDEVAAPARMTLQRKTKSTISVQGTGGKNKEVQVEVRKSRTYVRRSALEDEQRQAEAEETARLEAEEKARREAEEKARLDAEEKARREAEQARREAEEKARIEAQQKARQAQQPAKAAGSTAQQEAEKMAKREAEELKRQQEQAALTKAEELAAKKAEEARVMAEQNAARWAEEEAARAKESSDYHLTTNKHAQAAEDELDRKEETSRRTAAAAKGPKKAGRREDDRDARNPRARKGKRGKVATPNAMKHGFNKPAAAVNRDVVIGETITVAELANKMAVKGVEVIKVMMKMGAMATINQVIDQETAQLVAEEMGHKVVLRRENELEEAVLSDRDETSEAKPRAPVVTIMGHVDHGKTSLLDYIRKAKVAAGEAGGITQHIGAYHVETDSGMITFLDTPGHAAFTSMRARGAKATDIVVLVVAADDGVMPQTIEAIQHAKAAEVPLVVAVNKIDKPEADPDRVKTELARYNVMSEDWGGDCQFVHVSAKSGQGIDDLLEAILIQSEVLELKAVVDGMANGVVIESFLDKGRGPVATVLVQEGTLRQGDIVLCGLEYGRVRAMRDELGREIKEAGPSLPVEILGLSGVPSAGDEATVVRDEKKAREVALYRQGKFREVKLARQQKAKLENMFANMTEGEVSEVNVVIKADVQGSVEAICDALVKLSTDEVKVKIVGSGVGGITETDATLAAASSAILVGFNVRADASARKVIEAESLDLRYYSVIYDLIDEVKQAMSGMLAPEYRQEIIGLAEVRSVFKSPKFGAVAGCMVTEGVVKRSNRIRVLRDNVVIYEGELESLRRFKDDVNEVKNGYECGIAVKNYNDVREGDQIEVYETVEIQRTL.

2 disordered regions span residues 69 to 88 (RKTK…KEVQ) and 95 to 304 (RTYV…NAMK). Basic and acidic residues predominate over residues 101–161 (SALEDEQRQA…EEKARIEAQQ (61 aa)). The span at 162 to 179 (KARQAQQPAKAAGSTAQQ) shows a compositional bias: low complexity. Composition is skewed to basic and acidic residues over residues 180 to 196 (EAEK…KRQQ), 203 to 217 (KAEE…EARV), 226 to 239 (WAEE…ESSD), and 277 to 286 (RREDDRDARN). Basic residues predominate over residues 287-296 (PRARKGKRGK). The region spanning 397–566 (PRAPVVTIMG…LIQSEVLELK (170 aa)) is the tr-type G domain. The interval 406–413 (GHVDHGKT) is G1. A GTP-binding site is contributed by 406 to 413 (GHVDHGKT). Positions 431–435 (GITQH) are G2. A G3 region spans residues 452–455 (DTPG). Residues 452–456 (DTPGH) and 506–509 (NKID) contribute to the GTP site. The tract at residues 506–509 (NKID) is G4. The tract at residues 542–544 (SAK) is G5.

This sequence belongs to the TRAFAC class translation factor GTPase superfamily. Classic translation factor GTPase family. IF-2 subfamily.

It is found in the cytoplasm. Its function is as follows. One of the essential components for the initiation of protein synthesis. Protects formylmethionyl-tRNA from spontaneous hydrolysis and promotes its binding to the 30S ribosomal subunits. Also involved in the hydrolysis of GTP during the formation of the 70S ribosomal complex. In Aeromonas hydrophila subsp. hydrophila (strain ATCC 7966 / DSM 30187 / BCRC 13018 / CCUG 14551 / JCM 1027 / KCTC 2358 / NCIMB 9240 / NCTC 8049), this protein is Translation initiation factor IF-2.